A 136-amino-acid chain; its full sequence is Large ribosomal subunit protein uL16 (136 aa).

The protein belongs to the universal ribosomal protein uL16 family. In terms of assembly, part of the 50S ribosomal subunit.

Its function is as follows. Binds 23S rRNA and is also seen to make contacts with the A and possibly P site tRNAs. This is Large ribosomal subunit protein uL16 from Rickettsia typhi (strain ATCC VR-144 / Wilmington).